The primary structure comprises 185 residues: Pyruvate/ketoisovalerate oxidoreductases common subunit gamma (185 aa).

Heterotetramer of one alpha, one beta, one delta and one gamma chain.

It carries out the reaction 2 oxidized [2Fe-2S]-[ferredoxin] + pyruvate + CoA = 2 reduced [2Fe-2S]-[ferredoxin] + acetyl-CoA + CO2 + H(+). The catalysed reaction is 3-methyl-2-oxobutanoate + 2 oxidized [2Fe-2S]-[ferredoxin] + CoA = 2-methylpropanoyl-CoA + 2 reduced [2Fe-2S]-[ferredoxin] + CO2 + H(+). The polypeptide is Pyruvate/ketoisovalerate oxidoreductases common subunit gamma (porG) (Pyrococcus abyssi (strain GE5 / Orsay)).